Consider the following 90-residue polypeptide: MNADGPVVNVHVLFFAKSRELANTPRSTVEVPTEITATELLDHLVSKFGLTSIRDNLILAHNESYIDNLSDRILFKEGDELAIIPPLSGG.

Position 90 is a 1-thioglycine; alternate (glycine 90). Position 90 is a glycyl adenylate; alternate (glycine 90).

This sequence belongs to the MoaD family. MOCS2A subfamily. As to quaternary structure, heterotetramer; composed of 2 small (Mocs2A) and 2 large (Mocs2B) subunits. C-terminal thiocarboxylation occurs in 2 steps, it is first acyl-adenylated (-COAMP) via the hesA/moeB/thiF part of MOCS3, then thiocarboxylated (-COSH) via the rhodanese domain of MOCS3.

It is found in the cytoplasm. It participates in cofactor biosynthesis; molybdopterin biosynthesis. Its function is as follows. Acts as a sulfur carrier required for molybdopterin biosynthesis. Component of the molybdopterin synthase complex that catalyzes the conversion of precursor Z into molybdopterin by mediating the incorporation of 2 sulfur atoms into precursor Z to generate a dithiolene group. In the complex, serves as sulfur donor by being thiocarboxylated (-COSH) at its C-terminus by MOCS3. After interaction with Mocs2B, the sulfur is then transferred to precursor Z to form molybdopterin. Involved during biosynthesis of the molybdenum cofactor. The polypeptide is Molybdopterin synthase sulfur carrier subunit (Drosophila melanogaster (Fruit fly)).